The primary structure comprises 282 residues: MESRMWPALLLSHLLPLWPLLLLPLPPPAQGSSSSPRTPPAPARPPCARGGPSAPRHVCVWERAPPPSRSPRVPRSRRQVLPGTAPPATPSGFEEGPPSSQYPWAIVWGPTVSREDGGDPNSANPGFLDYGFAAPHGLATPHPNSDSMRGDGDGLILGEAPATLRPFLFGGRGEGVDPQLYVTITISIIIVLVATGIIFKFCWDRSQKRRRPSGQQGALRQEESQQPLTDLSPAGVTVLGAFGDSPTPTPDHEEPRGGPRPGMPHPKGAPAFQLNRIPLVNL.

The N-terminal stretch at 1-31 is a signal peptide; sequence MESRMWPALLLSHLLPLWPLLLLPLPPPAQG. The tract at residues 28–99 is disordered; that stretch reads PAQGSSSSPR…PSGFEEGPPS (72 aa). The Extracellular portion of the chain corresponds to 32-178; sequence SSSSPRTPPA…FGGRGEGVDP (147 aa). The segment covering 46 to 56 has biased composition (low complexity); the sequence is PCARGGPSAPR. Residue T140 is glycosylated (O-linked (GalNAc...) threonine). The helical transmembrane segment at 179–199 threads the bilayer; it reads QLYVTITISIIIVLVATGIIF. Over 200-282 the chain is Cytoplasmic; sequence KFCWDRSQKR…QLNRIPLVNL (83 aa). Positions 209–282 are disordered; that stretch reads RRRPSGQQGA…QLNRIPLVNL (74 aa). The segment covering 213–229 has biased composition (polar residues); sequence SGQQGALRQEESQQPLT.

Post-translationally, O-glycosylation at Thr-140 is essential for recognition by PILRA. As to expression, mainly expressed in adult brain and cerebellum. Weaker expression in fetal brain and virtually no expression in spleen, heart, kidney, liver and dorsal ganglion relative to brain.

The protein resides in the membrane. Its function is as follows. Acts as a ligand for PILRA in neural tissues, where it may be involved in immune regulation. The polypeptide is PILR alpha-associated neural protein (PIANP) (Homo sapiens (Human)).